A 70-amino-acid chain; its full sequence is Large ribosomal subunit protein uL29 (70 aa).

The protein belongs to the universal ribosomal protein uL29 family.

This Prochlorococcus marinus (strain NATL1A) protein is Large ribosomal subunit protein uL29.